The sequence spans 105 residues: MWALTVFVTILAAAIPITGVTGVCEDMAGNGRAPGEVWTEDSCTLYECGEDDSGELNTLFVAGCPLSLEIPKGCHYEPRSGNFPYCCPLLVCPDYVDKKNVRRRI.

Residues 1–22 (MWALTVFVTILAAAIPITGVTG) form the signal peptide.

Belongs to the scoloptoxin-16 family. Contains 4 disulfide bonds. In terms of tissue distribution, expressed by the venom gland.

It is found in the secreted. This Scolopendra morsitans (Tanzanian blue ringleg centipede) protein is U-scoloptoxin(16)-Sm4a.